A 539-amino-acid polypeptide reads, in one-letter code: Phenylalanine--tRNA ligase beta subunit (539 aa).

In terms of domain architecture, B5 spans 271 to 347 (LSPARWTVTT…KSYGYENLKA (77 aa)). Positions 325, 331, 334, and 335 each coordinate Mg(2+).

This sequence belongs to the phenylalanyl-tRNA synthetase beta subunit family. Type 2 subfamily. As to quaternary structure, tetramer of two alpha and two beta subunits. Mg(2+) is required as a cofactor.

The protein localises to the cytoplasm. It catalyses the reaction tRNA(Phe) + L-phenylalanine + ATP = L-phenylalanyl-tRNA(Phe) + AMP + diphosphate + H(+). This is Phenylalanine--tRNA ligase beta subunit from Methanothrix thermoacetophila (strain DSM 6194 / JCM 14653 / NBRC 101360 / PT) (Methanosaeta thermophila).